The sequence spans 561 residues: Putative transport protein YbjL (561 aa).

Transmembrane regions (helical) follow at residues 8–28 (LLNG…LCLG), 32–52 (LGSI…LLGQ), 66–86 (FMLF…SIFF), 94–114 (MLAL…GKLF), and 158–178 (NLSL…IVGA). RCK C-terminal domains are found at residues 200 to 288 (RGLD…SFRN) and 292 to 373 (VFDR…RIGF). 5 helical membrane passes run 383 to 403 (LLAF…TFQF), 406 to 426 (FSFG…LGFM), 451 to 471 (VFMA…LGAI), 475 to 495 (MLIA…LFGA), and 540 to 560 (AIAN…WPGL).

It belongs to the AAE transporter (TC 2.A.81) family. YbjL subfamily.

It is found in the cell membrane. The chain is Putative transport protein YbjL from Shigella sonnei (strain Ss046).